Consider the following 146-residue polypeptide: Urease accessory protein UreE 1 (146 aa).

The protein belongs to the UreE family.

It is found in the cytoplasm. Its function is as follows. Involved in urease metallocenter assembly. Binds nickel. Probably functions as a nickel donor during metallocenter assembly. This chain is Urease accessory protein UreE 1, found in Pseudomonas syringae pv. syringae (strain B728a).